The chain runs to 803 residues: Volume-regulated anion channel subunit LRRC8B (803 aa).

Over 1–25 (MITLTELKCLADAQSSYHILKPWWD) the chain is Cytoplasmic. The chain crosses the membrane as a helical span at residues 26–46 (VFWYYITLIMLLVAVLAGALQ). The Extracellular segment spans residues 47-119 (LTQSRVLCCL…YEKQLHWFAK (73 aa)). Disulfide bonds link cysteine 55-cysteine 304 and cysteine 109-cysteine 289. N-linked (GlcNAc...) asparagine glycosylation is present at asparagine 78. A helical transmembrane segment spans residues 120-140 (FFPYLVLLHTLIFAACSNFWL). Topologically, residues 141–261 (HYPSTSSRLE…DIIYRVYLKQ (121 aa)) are cytoplasmic. A phosphoserine mark is found at serine 186 and serine 196. A helical membrane pass occupies residues 262-282 (IIVKVILFVLIITYVPYFLSY). Residues 283 to 307 (ITLEIDCSIDVQAFTGYKRYQCVYS) are Extracellular-facing. The helical transmembrane segment at 308 to 328 (LAEIFKVLASFYVILVMLYGL) threads the bilayer. The Cytoplasmic segment spans residues 329–803 (TSSYSLWWML…ERLQTCLDKC (475 aa)). LRR repeat units lie at residues 415-439 (VKNS…VFEL), 440-462 (TEME…VAQL), 464-486 (NLRE…AFLE), 488-509 (NLRI…VFHL), 511-532 (NLKE…LHLE), 539-559 (NLRT…VTDL), 562-582 (SLQK…NNLK), 586-607 (NLKS…IFSL), 609-630 (NLHE…ISFQ), 634-655 (SLSC…IGAL), 657-678 (NLEQ…LFLC), 680-701 (KLHY…IQYL), 703-724 (NLQY…LFQC), 726-747 (KLQC…VGEL), and 749-771 (NLTH…EGCQ).

This sequence belongs to the LRRC8 family. In terms of assembly, heterohexamer; oligomerizes with other LRRC8 proteins (LRRC8A, LRRC8C, LRRC8D and/or LRRC8E) to form a heterohexamer. In vivo, the subunit composition may depend primarily on expression levels, and heterooligomeric channels containing various proportions of the different LRRC8 proteins may coexist.

It is found in the cell membrane. It localises to the endoplasmic reticulum membrane. It catalyses the reaction chloride(in) = chloride(out). It carries out the reaction iodide(out) = iodide(in). The enzyme catalyses taurine(out) = taurine(in). In terms of biological role, non-essential component of the volume-regulated anion channel (VRAC, also named VSOAC channel), an anion channel required to maintain a constant cell volume in response to extracellular or intracellular osmotic changes. The VRAC channel conducts iodide better than chloride and can also conduct organic osmolytes like taurine. Channel activity requires LRRC8A plus at least one other family member (LRRC8B, LRRC8C, LRRC8D or LRRC8E); channel characteristics depend on the precise subunit composition. In Mus musculus (Mouse), this protein is Volume-regulated anion channel subunit LRRC8B.